Reading from the N-terminus, the 841-residue chain is Copper-transporting P-type ATPase (841 aa).

A run of 6 helical transmembrane segments spans residues 186-206 (LWVS…PMLG), 218-238 (ATFI…LPFF), 256-276 (IGLG…APGI), 285-305 (GAAV…VFVG), 445-465 (AVFV…WAAI), and 474-494 (GLLA…GLAT). The 4-aspartylphosphate intermediate role is filled by Asp-530. A run of 2 helical transmembrane segments spans residues 602 to 622 (GIAD…DLGI) and 638 to 658 (GKTV…AVAD). Mg(2+)-binding residues include Asp-729 and Asp-733. Helical transmembrane passes span 742 to 762 (VGIA…ITLV) and 800 to 820 (VAAG…IAAA).

Belongs to the cation transport ATPase (P-type) (TC 3.A.3) family. Type IB subfamily.

It is found in the cell membrane. The enzyme catalyses Cu(2+)(in) + ATP + H2O = Cu(2+)(out) + ADP + phosphate + H(+). Involved in copper efflux. This is Copper-transporting P-type ATPase (actP) from Rhizobium leguminosarum bv. viciae.